A 222-amino-acid chain; its full sequence is GTP cyclohydrolase 1 (222 aa).

Positions 111, 114, and 182 each coordinate Zn(2+).

It belongs to the GTP cyclohydrolase I family. As to quaternary structure, homomer.

The enzyme catalyses GTP + H2O = 7,8-dihydroneopterin 3'-triphosphate + formate + H(+). The protein operates within cofactor biosynthesis; 7,8-dihydroneopterin triphosphate biosynthesis; 7,8-dihydroneopterin triphosphate from GTP: step 1/1. This is GTP cyclohydrolase 1 from Klebsiella pneumoniae (strain 342).